Consider the following 514-residue polypeptide: Membrane-bound lytic murein transglycosylase F (514 aa).

An N-terminal signal peptide occupies residues 1–30; sequence MKKLKINYLFIGILTLLLAAALWPSIPWFG. The tract at residues 31–269 is non-LT domain; sequence KTENHVAAIQ…RIEEKYLGHG (239 aa). Residues 270–514 form an LT domain region; that stretch reads DDFDYVDTRS…LFTPQKKEEK (245 aa). Glu314 is a catalytic residue.

This sequence in the N-terminal section; belongs to the bacterial solute-binding protein 3 family. It in the C-terminal section; belongs to the transglycosylase Slt family.

The protein localises to the cell outer membrane. It catalyses the reaction Exolytic cleavage of the (1-&gt;4)-beta-glycosidic linkage between N-acetylmuramic acid (MurNAc) and N-acetylglucosamine (GlcNAc) residues in peptidoglycan, from either the reducing or the non-reducing ends of the peptidoglycan chains, with concomitant formation of a 1,6-anhydrobond in the MurNAc residue.. Its function is as follows. Murein-degrading enzyme that degrades murein glycan strands and insoluble, high-molecular weight murein sacculi, with the concomitant formation of a 1,6-anhydromuramoyl product. Lytic transglycosylases (LTs) play an integral role in the metabolism of the peptidoglycan (PG) sacculus. Their lytic action creates space within the PG sacculus to allow for its expansion as well as for the insertion of various structures such as secretion systems and flagella. The chain is Membrane-bound lytic murein transglycosylase F from Salmonella arizonae (strain ATCC BAA-731 / CDC346-86 / RSK2980).